The chain runs to 158 residues: UPF0336 protein Mb0654 (158 aa).

This sequence belongs to the UPF0336 family.

This is UPF0336 protein Mb0654 from Mycobacterium bovis (strain ATCC BAA-935 / AF2122/97).